Here is a 65-residue protein sequence, read N- to C-terminus: Large ribosomal subunit protein uL29 (65 aa).

It belongs to the universal ribosomal protein uL29 family.

This chain is Large ribosomal subunit protein uL29, found in Brevibacillus brevis (strain 47 / JCM 6285 / NBRC 100599).